The following is a 193-amino-acid chain: dTTP/UTP pyrophosphatase (193 aa).

The active-site Proton acceptor is the D75.

Belongs to the Maf family. YhdE subfamily. The cofactor is a divalent metal cation.

Its subcellular location is the cytoplasm. The enzyme catalyses dTTP + H2O = dTMP + diphosphate + H(+). It catalyses the reaction UTP + H2O = UMP + diphosphate + H(+). In terms of biological role, nucleoside triphosphate pyrophosphatase that hydrolyzes dTTP and UTP. May have a dual role in cell division arrest and in preventing the incorporation of modified nucleotides into cellular nucleic acids. The polypeptide is dTTP/UTP pyrophosphatase (Chlorobium luteolum (strain DSM 273 / BCRC 81028 / 2530) (Pelodictyon luteolum)).